Here is an 853-residue protein sequence, read N- to C-terminus: DNA mismatch repair protein MutS (853 aa).

Residue 613-620 participates in ATP binding; that stretch reads GPNMGGKS.

It belongs to the DNA mismatch repair MutS family.

Functionally, this protein is involved in the repair of mismatches in DNA. It is possible that it carries out the mismatch recognition step. This protein has a weak ATPase activity. This Vibrio campbellii (strain ATCC BAA-1116) protein is DNA mismatch repair protein MutS.